A 474-amino-acid chain; its full sequence is Semenogelin-2 (474 aa).

A signal peptide spans 1 to 23 (MKSIILFVLSLLLILEKQAAVMG). Disordered regions lie at residues 24-62 (QKGG…SKGS), 132-158 (GGQA…LSSQ), 173-194 (KEQA…QSSY), 226-247 (VREE…DRLQ), and 272-474 (NLNQ…SSTE). Composition is skewed to polar residues over residues 31–40 (QLPSGSSQFP), 137–158 (RGTQ…LSSQ), and 174–194 (EQAS…QSSY). Residues 292-310 (RTEERQLNHGEKSVQKDVS) show a composition bias toward basic and acidic residues. Polar residues predominate over residues 325-334 (KSQNQVTIHS). Residues 335–346 (QDQEHGHKENKM) are compositionally biased toward basic and acidic residues. Polar residues predominate over residues 372–397 (GSISIQTEEQIHGKSQNQVRIPSQAQ). Residues 399–426 (YGHKENKISYRSSSTEERRLNSGEKDVQ) show a composition bias toward basic and acidic residues. A compositionally biased stretch (polar residues) spans 445–455 (KSQNQVTIPSQ). The segment covering 456 to 465 (DQEHGHKENK) has biased composition (basic and acidic residues).

The protein belongs to the semenogelin family. As to quaternary structure, interacts with SERPINA5.

The protein resides in the secreted. Functionally, participates in the formation of a gel matrix (sperm coagulum) entrapping the accessory gland secretions and ejaculated spermatozoa. The protein is Semenogelin-2 (SEMG2) of Gorilla gorilla gorilla (Western lowland gorilla).